The chain runs to 424 residues: Enolase (424 aa).

Glutamine 162 is a (2R)-2-phosphoglycerate binding site. The active-site Proton donor is glutamate 204. Residues aspartate 241, glutamate 284, and aspartate 311 each coordinate Mg(2+). The (2R)-2-phosphoglycerate site is built by lysine 336, arginine 365, serine 366, and lysine 387. Lysine 336 acts as the Proton acceptor in catalysis.

This sequence belongs to the enolase family. Mg(2+) is required as a cofactor.

The protein resides in the cytoplasm. Its subcellular location is the secreted. The protein localises to the cell surface. The catalysed reaction is (2R)-2-phosphoglycerate = phosphoenolpyruvate + H2O. It participates in carbohydrate degradation; glycolysis; pyruvate from D-glyceraldehyde 3-phosphate: step 4/5. Its function is as follows. Catalyzes the reversible conversion of 2-phosphoglycerate (2-PG) into phosphoenolpyruvate (PEP). It is essential for the degradation of carbohydrates via glycolysis. The protein is Enolase of Chelativorans sp. (strain BNC1).